A 325-amino-acid polypeptide reads, in one-letter code: Beta-ketoacyl-[acyl-carrier-protein] synthase III (325 aa).

Active-site residues include Cys112 and His250. An ACP-binding region spans residues Gln251–Arg255. The active site involves Asn280.

This sequence belongs to the thiolase-like superfamily. FabH family. In terms of assembly, homodimer.

It localises to the cytoplasm. The enzyme catalyses malonyl-[ACP] + acetyl-CoA + H(+) = 3-oxobutanoyl-[ACP] + CO2 + CoA. It functions in the pathway lipid metabolism; fatty acid biosynthesis. In terms of biological role, catalyzes the condensation reaction of fatty acid synthesis by the addition to an acyl acceptor of two carbons from malonyl-ACP. Catalyzes the first condensation reaction which initiates fatty acid synthesis and may therefore play a role in governing the total rate of fatty acid production. Possesses both acetoacetyl-ACP synthase and acetyl transacylase activities. Its substrate specificity determines the biosynthesis of branched-chain and/or straight-chain of fatty acids. The protein is Beta-ketoacyl-[acyl-carrier-protein] synthase III of Lactococcus lactis subsp. cremoris (strain SK11).